The primary structure comprises 25 residues: IWLTALKFLGKHAAKHLAKQQLSKL.

At L25 the chain carries Leucine amide.

Belongs to the cationic peptide 04 (cupiennin) family. 05 subfamily. In terms of tissue distribution, expressed by the venom gland.

Its subcellular location is the secreted. The protein resides in the target cell membrane. In terms of biological role, forms pore that permeabilize the cell membrane. Promotes efflux of calcium from synaptosomes, causes hemolysis, and dissipates voltage gradients across muscle membrane. Potently inhibits the growth of bacteria, yeast and Leishmania. Is lethal to lepidopteran larvae. May function both in the prey capture strategy as well as protection from infectious organisms arising from prey ingestion. This is M-lycotoxin-Hc1a from Hogna carolinensis (Carolina wolf spider).